The sequence spans 609 residues: Chaperone protein DnaK (609 aa).

Residue threonine 173 is modified to Phosphothreonine; by autocatalysis. Over residues 525-542 (ENISDEDKKNAEEKKDAL) the composition is skewed to basic and acidic residues. Disordered stretches follow at residues 525 to 554 (ENIS…IDDI) and 574 to 609 (EQAQ…EDKK). The segment covering 574-587 (EQAQQAQQQGQEEQ) has biased composition (low complexity). Residues 597 to 609 (ADFKEVKDDEDKK) show a composition bias toward basic and acidic residues.

The protein belongs to the heat shock protein 70 family.

Its function is as follows. Acts as a chaperone. This chain is Chaperone protein DnaK, found in Staphylococcus epidermidis (strain ATCC 35984 / DSM 28319 / BCRC 17069 / CCUG 31568 / BM 3577 / RP62A).